Here is a 123-residue protein sequence, read N- to C-terminus: Small ribosomal subunit protein uS13 (123 aa).

The disordered stretch occupies residues 97–123; that stretch reads PVRGQRTRSNARTRKGPRPSRIKKKGK. Basic residues predominate over residues 101–123; sequence QRTRSNARTRKGPRPSRIKKKGK.

This sequence belongs to the universal ribosomal protein uS13 family. Part of the 30S ribosomal subunit. Forms a loose heterodimer with protein S19. Forms two bridges to the 50S subunit in the 70S ribosome.

In terms of biological role, located at the top of the head of the 30S subunit, it contacts several helices of the 16S rRNA. In the 70S ribosome it contacts the 23S rRNA (bridge B1a) and protein L5 of the 50S subunit (bridge B1b), connecting the 2 subunits; these bridges are implicated in subunit movement. Contacts the tRNAs in the A and P-sites. The sequence is that of Small ribosomal subunit protein uS13 from Fervidobacterium nodosum (strain ATCC 35602 / DSM 5306 / Rt17-B1).